Consider the following 319-residue polypeptide: tRNA-cytidine(32) 2-sulfurtransferase (319 aa).

Residues 43–48 (SGGKDS) carry the PP-loop motif motif. Residues cysteine 118, cysteine 121, and cysteine 209 each coordinate [4Fe-4S] cluster.

This sequence belongs to the TtcA family. In terms of assembly, homodimer. It depends on Mg(2+) as a cofactor. The cofactor is [4Fe-4S] cluster.

The protein localises to the cytoplasm. It carries out the reaction cytidine(32) in tRNA + S-sulfanyl-L-cysteinyl-[cysteine desulfurase] + AH2 + ATP = 2-thiocytidine(32) in tRNA + L-cysteinyl-[cysteine desulfurase] + A + AMP + diphosphate + H(+). Its pathway is tRNA modification. In terms of biological role, catalyzes the ATP-dependent 2-thiolation of cytidine in position 32 of tRNA, to form 2-thiocytidine (s(2)C32). The sulfur atoms are provided by the cysteine/cysteine desulfurase (IscS) system. In Neisseria meningitidis serogroup C / serotype 2a (strain ATCC 700532 / DSM 15464 / FAM18), this protein is tRNA-cytidine(32) 2-sulfurtransferase.